Consider the following 445-residue polypeptide: Phosphoglucosamine mutase 1 (445 aa).

Serine 102 (phosphoserine intermediate) is an active-site residue. Positions 102, 241, 243, and 245 each coordinate Mg(2+). Position 102 is a phosphoserine (serine 102).

The protein belongs to the phosphohexose mutase family. Requires Mg(2+) as cofactor. Post-translationally, activated by phosphorylation.

The catalysed reaction is alpha-D-glucosamine 1-phosphate = D-glucosamine 6-phosphate. Catalyzes the conversion of glucosamine-6-phosphate to glucosamine-1-phosphate. The protein is Phosphoglucosamine mutase 1 of Shewanella baltica (strain OS185).